Reading from the N-terminus, the 268-residue chain is Nuclear protein UL4 homolog (268 aa).

It belongs to the alphaherpesvirinae HHV-1 UL4 family.

It localises to the host nucleus. This Gallid herpesvirus 2 (strain Chicken/Md5/ATCC VR-987) (GaHV-2) protein is Nuclear protein UL4 homolog (MDV016).